The sequence spans 298 residues: Acetylglutamate kinase (298 aa).

Substrate contacts are provided by residues 64 to 65 (GG), Arg-86, and Asn-195.

The protein belongs to the acetylglutamate kinase family. ArgB subfamily.

The protein resides in the cytoplasm. It catalyses the reaction N-acetyl-L-glutamate + ATP = N-acetyl-L-glutamyl 5-phosphate + ADP. It functions in the pathway amino-acid biosynthesis; L-arginine biosynthesis; N(2)-acetyl-L-ornithine from L-glutamate: step 2/4. Functionally, catalyzes the ATP-dependent phosphorylation of N-acetyl-L-glutamate. This chain is Acetylglutamate kinase, found in Aquifex aeolicus (strain VF5).